Consider the following 332-residue polypeptide: Mitochondrial glycine transporter (332 aa).

Solcar repeat units lie at residues 11 to 94 (SSSY…LRQN), 121 to 205 (LSNL…LKKR), and 235 to 319 (TSAS…LIRR). Transmembrane regions (helical) follow at residues 17–42 (FGAGLGSGILSAVLLQPADLLKTRVQ), 69–95 (GTVPSALRTGFGSAIYFTSLNALRQNV), 127–152 (LTTGAVARAGAGFILMPMTIIKVRYE), 180–203 (GFGATAIRDAPYAGLYVLFYEELK), 239–265 (INFGSGVLAAGLATAITNPFDAIKTRI), and 294–312 (GLGLRMGRKAVSSALAWTI).

Belongs to the mitochondrial carrier (TC 2.A.29) family. SLC25A38 subfamily.

It localises to the mitochondrion inner membrane. The catalysed reaction is glycine(in) = glycine(out). Mitochondrial glycine transporter that imports glycine into the mitochondrial matrix. Plays an important role in providing glycine for the first enzymatic step in heme biosynthesis, the condensation of glycine with succinyl-CoA to produce 5-aminolevulinate (ALA) in the mitochondrial matrix. This chain is Mitochondrial glycine transporter, found in Botryotinia fuckeliana (strain B05.10) (Noble rot fungus).